The following is a 901-amino-acid chain: HTH-type transcriptional regulator MalT (901 aa).

39–46 contacts ATP; it reads SPAGYGKT. The HTH luxR-type domain maps to 829–894; sequence ELIRTSPLTQ…DAVQHAQQLL (66 aa). The segment at residues 853 to 872 is a DNA-binding region (H-T-H motif); it reads NEQIAGELAVAATTIKTHIR.

It belongs to the MalT family. Monomer in solution. Oligomerizes to an active state in the presence of the positive effectors ATP and maltotriose.

Its activity is regulated as follows. Activated by ATP and maltotriose, which are both required for DNA binding. In terms of biological role, positively regulates the transcription of the maltose regulon whose gene products are responsible for uptake and catabolism of malto-oligosaccharides. Specifically binds to the promoter region of its target genes, recognizing a short DNA motif called the MalT box. The chain is HTH-type transcriptional regulator MalT from Enterobacter sp. (strain 638).